We begin with the raw amino-acid sequence, 194 residues long: Acid tolerance regulatory protein ActR (194 aa).

The 115-residue stretch at 24–138 folds into the Response regulatory domain; it reads SLLIVDDDTA…DILAALIQRP (115 aa). Position 73 is a 4-aspartylphosphate (Asp-73).

Post-translationally, phosphorylated by ActS.

Its function is as follows. Member of the two-component regulatory system ActS/ActR acting in acid tolerance. These data implicate that a two-component sensor may be involved in pH sensing and/or response. This chain is Acid tolerance regulatory protein ActR (actR), found in Sinorhizobium medicae (strain WSM419) (Ensifer medicae).